A 404-amino-acid polypeptide reads, in one-letter code: Glucose-1-phosphate adenylyltransferase (404 aa).

Residues Tyr-99, Gly-164, 179-180 (EK), and Ser-197 contribute to the alpha-D-glucose 1-phosphate site.

Belongs to the bacterial/plant glucose-1-phosphate adenylyltransferase family.

The catalysed reaction is alpha-D-glucose 1-phosphate + ATP + H(+) = ADP-alpha-D-glucose + diphosphate. Its pathway is capsule biogenesis; capsule polysaccharide biosynthesis. It functions in the pathway glycan biosynthesis; glycogen biosynthesis. Involved in the biosynthesis of ADP-glucose, a building block, required in the biosynthesis of maltose-1-phosphate (M1P) and in the elongation reactions to produce linear alpha-1,4-glucans. Catalyzes the reaction between ATP and alpha-D-glucose 1-phosphate (G1P) to produce pyrophosphate and ADP-Glc. The polypeptide is Glucose-1-phosphate adenylyltransferase (Mycobacterium marinum (strain ATCC BAA-535 / M)).